A 314-amino-acid chain; its full sequence is Olfactory receptor 9A1 (314 aa).

The Extracellular portion of the chain corresponds to 1–24 (MLGNYSSATEFFLLGFPGSQEVCR). N-linked (GlcNAc...) asparagine glycosylation is present at Asn-4. A helical membrane pass occupies residues 25–45 (ILFATFFLLYAVTVMGNVVII). The Cytoplasmic segment spans residues 46–64 (ITVCVDKCLQSPIYFFLGH). A helical transmembrane segment spans residues 65-85 (LCVLEILITSTAVPFMLWGLL). The Extracellular segment spans residues 86–99 (LPSTQIMSLTACAA). Cysteines 97 and 179 form a disulfide. The helical transmembrane segment at 100–120 (QLYLYLSLGTLELALMGVMAV) threads the bilayer. Over 121–140 (DRYVAVCNPLRYNIIMNSST) the chain is Cytoplasmic. The helical transmembrane segment at 141 to 161 (FIWVIIVSWVLGFLSEIWPVY) threads the bilayer. At 162–196 (ATFQLTFCKSSVLDHFYCDRGQLLKVSCEDTLFRE) the chain is on the extracellular side. Residues 197-217 (FILFLMAVFIIIGSLIPTIVS) form a helical membrane-spanning segment. At 218 to 239 (YTYIISTNLKIPSASGWRKSFS) the chain is on the cytoplasmic side. The chain crosses the membrane as a helical span at residues 240–260 (TCASHFTYVVIGYGSCLFLYV). At 261-271 (KPKQTQAAEYN) the chain is on the extracellular side. A helical membrane pass occupies residues 272–292 (RVVSLLVLVVTPFLNPFIFTL). The Cytoplasmic segment spans residues 293-314 (RNDKFIQAFGDGMKHCYKLLKN).

The protein belongs to the G-protein coupled receptor 1 family.

Its subcellular location is the cell membrane. In terms of biological role, odorant receptor. In Homo sapiens (Human), this protein is Olfactory receptor 9A1 (OR9A1P).